The following is a 319-amino-acid chain: ATP-dependent 6-phosphofructokinase (319 aa).

Gly-11 contacts ATP. 21–25 (RAVVR) provides a ligand contact to ADP. Residues 72 to 73 (RC) and 102 to 105 (GDGS) each bind ATP. Residue Asp-103 participates in Mg(2+) binding. Position 125-127 (125-127 (TID)) interacts with substrate. The active-site Proton acceptor is Asp-127. Residue Arg-154 participates in ADP binding. Substrate-binding positions include Arg-162 and 169–171 (MGR). ADP contacts are provided by residues 185-187 (GAE), Arg-211, and 213-215 (KKH). Substrate is bound by residues Glu-222, Arg-243, and 249-252 (HVQR).

Belongs to the phosphofructokinase type A (PFKA) family. ATP-dependent PFK group I subfamily. Prokaryotic clade 'B1' sub-subfamily. As to quaternary structure, homotetramer. Requires Mg(2+) as cofactor.

The protein localises to the cytoplasm. The enzyme catalyses beta-D-fructose 6-phosphate + ATP = beta-D-fructose 1,6-bisphosphate + ADP + H(+). It functions in the pathway carbohydrate degradation; glycolysis; D-glyceraldehyde 3-phosphate and glycerone phosphate from D-glucose: step 3/4. With respect to regulation, allosterically activated by ADP and other diphosphonucleosides, and allosterically inhibited by phosphoenolpyruvate. Catalyzes the phosphorylation of D-fructose 6-phosphate to fructose 1,6-bisphosphate by ATP, the first committing step of glycolysis. This is ATP-dependent 6-phosphofructokinase from Bacillus cytotoxicus (strain DSM 22905 / CIP 110041 / 391-98 / NVH 391-98).